The primary structure comprises 85 residues: Small ribosomal subunit protein uS17 (85 aa).

This sequence belongs to the universal ribosomal protein uS17 family. Part of the 30S ribosomal subunit.

One of the primary rRNA binding proteins, it binds specifically to the 5'-end of 16S ribosomal RNA. The protein is Small ribosomal subunit protein uS17 of Desulforudis audaxviator (strain MP104C).